A 517-amino-acid polypeptide reads, in one-letter code: Acetylcholine receptor subunit gamma (517 aa).

An N-terminal signal peptide occupies residues 1–22 (MHGGQGPLLLLLLLAVCLGAQG). The Extracellular segment spans residues 23-240 (RNQEERLLAD…VVFYLLIQRK (218 aa)). Asn-52 and Asn-163 each carry an N-linked (GlcNAc...) asparagine glycan. An intrachain disulfide couples Cys-150 to Cys-164. 3 consecutive transmembrane segments (helical) span residues 241 to 265 (PLFY…IHFL), 275 to 293 (TVAI…LVAK), and 309 to 330 (LTFL…LNVS). The Cytoplasmic portion of the chain corresponds to 331-474 (LRSPHTHSMA…WFLVGRVLDR (144 aa)). The helical transmembrane segment at 475–495 (VCFLAMLSLFICGTAGIFLMA) threads the bilayer.

Belongs to the ligand-gated ion channel (TC 1.A.9) family. Acetylcholine receptor (TC 1.A.9.1) subfamily. Gamma/CHRNG sub-subfamily. As to quaternary structure, pentamer of two alpha chains, and one each of the beta, delta, and gamma (in immature muscle) or epsilon (in mature muscle) chains.

Its subcellular location is the postsynaptic cell membrane. It localises to the cell membrane. It carries out the reaction K(+)(in) = K(+)(out). It catalyses the reaction Na(+)(in) = Na(+)(out). Functionally, after binding acetylcholine, the AChR responds by an extensive change in conformation that affects all subunits and leads to opening of an ion-conducting channel across the plasma membrane. The sequence is that of Acetylcholine receptor subunit gamma from Homo sapiens (Human).